The sequence spans 319 residues: MIGLIITAIISAVLIMALLVVAGTFTWVERRLLGFVQERYGPNRVGPFGSLQWVADTVKILTKEDRPPPGADKLTYILAPAIAATPVLAGFGVVAFGDGLVLAPVDVGVLFLLGMMGLTAYAAMLGAWASNNRFSMMGGMRAAAQMLAYEVFLGLSLMGAVMLAGSLSMHAIVEAQRDVWFVVLQPLGAALFCIAGVAAAHRLPFDLPESENDLVAGFITEYTGMSFGLFFLGEYLAVLLVSALAVTLFFGGWLGPWLPGPIWFGLKTAVIAVVFVWLRATLPRPRYDQLLGFAWKIALPLSLLNLLLTGIVVVARSAP.

Transmembrane regions (helical) follow at residues 1–21, 77–97, 107–127, 147–167, 179–199, 214–234, 238–258, 262–282, and 293–313; these read MIGL…LLVV, ILAP…VAFG, VGVL…MLGA, LAYE…AGSL, VWFV…GVAA, LVAG…FLGE, VLLV…GPWL, IWFG…RATL, and FAWK…GIVV.

It belongs to the complex I subunit 1 family. In terms of assembly, NDH-1 is composed of 14 different subunits. Subunits NuoA, H, J, K, L, M, N constitute the membrane sector of the complex.

It is found in the cell inner membrane. The catalysed reaction is a quinone + NADH + 5 H(+)(in) = a quinol + NAD(+) + 4 H(+)(out). Functionally, NDH-1 shuttles electrons from NADH, via FMN and iron-sulfur (Fe-S) centers, to quinones in the respiratory chain. The immediate electron acceptor for the enzyme in this species is believed to be ubiquinone. Couples the redox reaction to proton translocation (for every two electrons transferred, four hydrogen ions are translocated across the cytoplasmic membrane), and thus conserves the redox energy in a proton gradient. This subunit may bind ubiquinone. This Rhodopseudomonas palustris (strain HaA2) protein is NADH-quinone oxidoreductase subunit H 1.